The sequence spans 1089 residues: Platelet-derived growth factor receptor alpha (1089 aa).

The N-terminal stretch at 1-23 (MGTSHPAFLVLGCLLTGLSLILC) is a signal peptide. 5 consecutive Ig-like C2-type domains span residues 24–113 (QLSL…NELE), 117–201 (IYIY…FQTI), 202–306 (PFNV…KKVT), 319–410 (PTFS…FELL), and 414–517 (PSSI…LKLV). Residues 24–528 (QLSLPSILPN…PTLRSELTVA (505 aa)) lie on the Extracellular side of the membrane. Asn-42, Asn-76, Asn-103, and Asn-179 each carry an N-linked (GlcNAc...) asparagine glycan. A disulfide bridge connects residues Cys-49 and Cys-100. 2 cysteine pairs are disulfide-bonded: Cys-150–Cys-189 and Cys-235–Cys-290. N-linked (GlcNAc...) asparagine glycosylation is found at Asn-353, Asn-359, Asn-458, and Asn-468. The cysteines at positions 435 and 501 are disulfide-linked. The chain crosses the membrane as a helical span at residues 529-549 (AAVLVLLVIVIISLIVLVVIW). Topologically, residues 550–1089 (KQKPRYEIRW…SSDLVEDSFL (540 aa)) are cytoplasmic. Tyr-572 and Tyr-574 each carry phosphotyrosine; by autocatalysis. A Protein kinase domain is found at 593-954 (LVLGRVLGSG…HLSEIVENLL (362 aa)). ATP contacts are provided by residues 599-607 (LGSGAFGKV) and Lys-627. Phosphotyrosine; by autocatalysis occurs at positions 720, 731, 742, 754, 762, and 768. Asp-818 serves as the catalytic Proton acceptor. Residues Tyr-849, Tyr-988, and Tyr-1018 each carry the phosphotyrosine; by autocatalysis modification. The disordered stretch occupies residues 1018–1089 (YIIPLPDIDP…SSDLVEDSFL (72 aa)). The segment covering 1041-1059 (SSQTSEESAIETGSSSSTF) has biased composition (polar residues). Residues 1065 to 1089 (ETIEDIDMMDDIGIDSSDLVEDSFL) show a composition bias toward acidic residues.

The protein belongs to the protein kinase superfamily. Tyr protein kinase family. CSF-1/PDGF receptor subfamily. As to quaternary structure, interacts with homodimeric PDGFA, PDGFB and PDGFC, and with heterodimers formed by PDGFA and PDGFB. Monomer in the absence of bound ligand. Interaction with dimeric PDGFA, PDGFB and/or PDGFC leads to receptor dimerization, where both PDGFRA homodimers and heterodimers with PDGFRB are observed. Interacts (tyrosine phosphorylated) with SHB (via SH2 domain). Interacts (tyrosine phosphorylated) with SHF (via SH2 domain). Interacts (tyrosine phosphorylated) with SRC (via SH2 domain). Interacts (tyrosine phosphorylated) with PIK3R1. Interacts (tyrosine phosphorylated) with PLCG1 (via SH2 domain). Interacts (tyrosine phosphorylated) with CRK, GRB2 and GRB7. Interacts with CD248; this interaction promotes PDGF receptor signaling pathway. (Microbial infection) Interacts with human cytomegalovirus/HHV-5 envelope glycoprotein B/gB. Also interacts with the trimeric complex gH-gL-gO. Trimer-PDGFRA interaction has an inhibitory effect on PDGFRA signaling. Post-translationally, N-glycosylated. In terms of processing, ubiquitinated, leading to its internalization and degradation. Autophosphorylated on tyrosine residues upon ligand binding. Autophosphorylation occurs in trans, i.e. one subunit of the dimeric receptor phosphorylates tyrosine residues on the other subunit. Phosphorylation at Tyr-731 and Tyr-742 is important for interaction with PIK3R1. Phosphorylation at Tyr-720 and Tyr-754 is important for interaction with PTPN11. Phosphorylation at Tyr-762 is important for interaction with CRK. Phosphorylation at Tyr-572 and Tyr-574 is important for interaction with SRC and SRC family members. Phosphorylation at Tyr-988 and Tyr-1018 is important for interaction with PLCG1. Detected in platelets (at protein level). Widely expressed. Detected in brain, fibroblasts, smooth muscle, heart, and embryo. Expressed in primary and metastatic colon tumors and in normal colon tissue.

The protein resides in the cell membrane. The protein localises to the cell projection. Its subcellular location is the cilium. It localises to the golgi apparatus. It catalyses the reaction L-tyrosyl-[protein] + ATP = O-phospho-L-tyrosyl-[protein] + ADP + H(+). Present in an inactive conformation in the absence of bound ligand. Binding of PDGFA and/or PDGFB leads to dimerization and activation by autophosphorylation on tyrosine residues. Inhibited by imatinib, nilotinib and sorafenib. Its function is as follows. Tyrosine-protein kinase that acts as a cell-surface receptor for PDGFA, PDGFB and PDGFC and plays an essential role in the regulation of embryonic development, cell proliferation, survival and chemotaxis. Depending on the context, promotes or inhibits cell proliferation and cell migration. Plays an important role in the differentiation of bone marrow-derived mesenchymal stem cells. Required for normal skeleton development and cephalic closure during embryonic development. Required for normal development of the mucosa lining the gastrointestinal tract, and for recruitment of mesenchymal cells and normal development of intestinal villi. Plays a role in cell migration and chemotaxis in wound healing. Plays a role in platelet activation, secretion of agonists from platelet granules, and in thrombin-induced platelet aggregation. Binding of its cognate ligands - homodimeric PDGFA, homodimeric PDGFB, heterodimers formed by PDGFA and PDGFB or homodimeric PDGFC -leads to the activation of several signaling cascades; the response depends on the nature of the bound ligand and is modulated by the formation of heterodimers between PDGFRA and PDGFRB. Phosphorylates PIK3R1, PLCG1, and PTPN11. Activation of PLCG1 leads to the production of the cellular signaling molecules diacylglycerol and inositol 1,4,5-trisphosphate, mobilization of cytosolic Ca(2+) and the activation of protein kinase C. Phosphorylates PIK3R1, the regulatory subunit of phosphatidylinositol 3-kinase, and thereby mediates activation of the AKT1 signaling pathway. Mediates activation of HRAS and of the MAP kinases MAPK1/ERK2 and/or MAPK3/ERK1. Promotes activation of STAT family members STAT1, STAT3 and STAT5A and/or STAT5B. Receptor signaling is down-regulated by protein phosphatases that dephosphorylate the receptor and its down-stream effectors, and by rapid internalization of the activated receptor. This is Platelet-derived growth factor receptor alpha (PDGFRA) from Homo sapiens (Human).